Here is a 159-residue protein sequence, read N- to C-terminus: MTTFNGKINGNGLKIGIAVARFNAFVTQQLLTGAQESLVQHGVNETDIDVAWVPGAFEIPLTVQKMITTKRYDGVIALGAVIRGATAHFDYVCSGVTTGIATVSLATDTPIMFGVLTTDTIEQAMDRAGFKSGNKGADCAVSLLETLDVQRAILKADLA.

5-amino-6-(D-ribitylamino)uracil is bound by residues Phe-22, 56–58 (AFE), and 80–82 (AVI). 85–86 (AT) lines the (2S)-2-hydroxy-3-oxobutyl phosphate pocket. The Proton donor role is filled by His-88. Phe-113 serves as a coordination point for 5-amino-6-(D-ribitylamino)uracil. Arg-127 provides a ligand contact to (2S)-2-hydroxy-3-oxobutyl phosphate.

It belongs to the DMRL synthase family.

It catalyses the reaction (2S)-2-hydroxy-3-oxobutyl phosphate + 5-amino-6-(D-ribitylamino)uracil = 6,7-dimethyl-8-(1-D-ribityl)lumazine + phosphate + 2 H2O + H(+). The protein operates within cofactor biosynthesis; riboflavin biosynthesis; riboflavin from 2-hydroxy-3-oxobutyl phosphate and 5-amino-6-(D-ribitylamino)uracil: step 1/2. Its function is as follows. Catalyzes the formation of 6,7-dimethyl-8-ribityllumazine by condensation of 5-amino-6-(D-ribitylamino)uracil with 3,4-dihydroxy-2-butanone 4-phosphate. This is the penultimate step in the biosynthesis of riboflavin. The chain is 6,7-dimethyl-8-ribityllumazine synthase from Lactiplantibacillus plantarum (strain ATCC BAA-793 / NCIMB 8826 / WCFS1) (Lactobacillus plantarum).